The primary structure comprises 246 residues: tRNA pseudouridine synthase A (246 aa).

The active-site Nucleophile is the D52. A substrate-binding site is contributed by Y111.

Belongs to the tRNA pseudouridine synthase TruA family. Homodimer.

The enzyme catalyses uridine(38/39/40) in tRNA = pseudouridine(38/39/40) in tRNA. In terms of biological role, formation of pseudouridine at positions 38, 39 and 40 in the anticodon stem and loop of transfer RNAs. This chain is tRNA pseudouridine synthase A, found in Borrelia garinii subsp. bavariensis (strain ATCC BAA-2496 / DSM 23469 / PBi) (Borreliella bavariensis).